The sequence spans 509 residues: ATP synthase subunit alpha, mitochondrial (509 aa).

Position 171–178 (171–178 (GDRQTGKT)) interacts with ATP.

Belongs to the ATPase alpha/beta chains family. In terms of assembly, F-type ATPases have 2 components, CF(1) - the catalytic core - and CF(0) - the membrane proton channel. CF(1) has five subunits: alpha(3), beta(3), gamma(1), delta(1), epsilon(1). CF(0) has three main subunits: a, b and c.

The protein resides in the mitochondrion. It localises to the mitochondrion inner membrane. Functionally, mitochondrial membrane ATP synthase (F(1)F(0) ATP synthase or Complex V) produces ATP from ADP in the presence of a proton gradient across the membrane which is generated by electron transport complexes of the respiratory chain. F-type ATPases consist of two structural domains, F(1) - containing the extramembraneous catalytic core, and F(0) - containing the membrane proton channel, linked together by a central stalk and a peripheral stalk. During catalysis, ATP synthesis in the catalytic domain of F(1) is coupled via a rotary mechanism of the central stalk subunits to proton translocation. Subunits alpha and beta form the catalytic core in F(1). Rotation of the central stalk against the surrounding alpha(3)beta(3) subunits leads to hydrolysis of ATP in three separate catalytic sites on the beta subunits. Subunit alpha does not bear the catalytic high-affinity ATP-binding sites. This is ATP synthase subunit alpha, mitochondrial (ATPA) from Triticum aestivum (Wheat).